The chain runs to 55 residues: Large ribosomal subunit protein bL33 (55 aa).

It belongs to the bacterial ribosomal protein bL33 family.

The protein is Large ribosomal subunit protein bL33 of Dinoroseobacter shibae (strain DSM 16493 / NCIMB 14021 / DFL 12).